The sequence spans 287 residues: Putative esterase/lipase HI_0193 (287 aa).

Positions Pro-47 to Pro-273 constitute an AB hydrolase-1 domain. Active-site residues include Ser-119 and His-266.

The protein belongs to the DmpD/TodF/XylF esterase family.

This Haemophilus influenzae (strain ATCC 51907 / DSM 11121 / KW20 / Rd) protein is Putative esterase/lipase HI_0193.